Here is a 4563-residue protein sequence, read N- to C-terminus: Apolipoprotein B-100 (4563 aa).

Positions 1–27 are cleaved as a signal peptide; sequence MDPPRPALLALLALPALLLLLLAGARA. The segment at 32–126 is heparin-binding; sequence LENVSLVCPK…KNSEEFAAAM (95 aa). Residue Asn34 is glycosylated (N-linked (GlcNAc...) asparagine). Cystine bridges form between Cys39–Cys88 and Cys78–Cys97. The 627-residue stretch at 46–672 folds into the Vitellogenin domain; that stretch reads FKHLRKYTYN…PNNYLPKESM (627 aa). Asn185 carries N-linked (GlcNAc...) asparagine glycosylation. 4 disulfides stabilise this stretch: Cys186–Cys212, Cys245–Cys261, Cys385–Cys390, and Cys478–Cys513. Positions 232–306 are heparin-binding; sequence TRPLSTLISS…RFFGEGTKKM (75 aa). The tract at residues 902–959 is heparin-binding; that stretch reads NTNFFHESGLEAHVALKAGKLKFIIPSPKRPVKLLSGGNTLHLVSTTKTEVIPPLIEN. A disulfide bond links Cys966 and Cys976. Asn983 is a glycosylation site (N-linked (GlcNAc...) asparagine). The S-palmitoyl cysteine moiety is linked to residue Cys1112. 3 N-linked (GlcNAc...) asparagine glycosylation sites follow: Asn1368, Asn1377, and Asn1523. Lys2004 is subject to N6-acetyllysine. A heparin-binding region spans residues 2043–2178; sequence RDAVEKPQEF…EKLSQLQTYM (136 aa). Residues Asn2239, Asn2560, Asn2779, Asn2982, and Asn3101 are each glycosylated (N-linked (GlcNAc...) asparagine). A heparin-binding region spans residues 3161–3236; the sequence is FLKTTKQSFD…KIKFDKYKAE (76 aa). A basic (possible receptor binding region) region spans residues 3174-3184; the sequence is KAQYKKNKHRH. An intrachain disulfide couples Cys3194 to Cys3324. An N-linked (GlcNAc...) asparagine glycan is attached at Asn3224. Ser3279 carries the post-translational modification Phosphoserine. Asn3336 and Asn3358 each carry an N-linked (GlcNAc...) asparagine glycan. Residues 3373–3393 form an LDL receptor binding region; the sequence is VIDALQYKLEGTTRLTRKRGL. The heparin-binding stretch occupies residues 3383–3516; that stretch reads GTTRLTRKRG…REYSGTIASE (134 aa). The segment at 3386–3394 is basic (possible receptor binding region); the sequence is RLTRKRGLK. N-linked (GlcNAc...) asparagine glycans are attached at residues Asn3411, Asn3465, and Asn3895. Ser4048 is subject to Phosphoserine; by FAM20C. Thr4052 is subject to Phosphothreonine. 2 N-linked (GlcNAc...) asparagine glycosylation sites follow: Asn4237 and Asn4431.

Interacts with PCSK9. Interacts with MTTP. Interacts with AUP1. Interacts with CIDEB. In terms of processing, palmitoylated; structural requirement for proper assembly of the hydrophobic core of the lipoprotein particle.

It localises to the cytoplasm. The protein resides in the secreted. Its subcellular location is the lipid droplet. Functionally, apolipoprotein B is a major protein constituent of chylomicrons (apo B-48), LDL (apo B-100) and VLDL (apo B-100). Apo B-100 functions as a recognition signal for the cellular binding and internalization of LDL particles by the apoB/E receptor. The sequence is that of Apolipoprotein B-100 (APOB) from Homo sapiens (Human).